Consider the following 1438-residue polypeptide: Pyochelin synthetase PchE (1438 aa).

Residues 6–85 (DSRTALRDWL…AWLDLLACAD (80 aa)) enclose the Carrier 1 domain. Position 46 is an O-(pantetheine 4'-phosphoryl)serine (serine 46). The segment at 136 to 442 (RTRDVDPQRL…ARRQGQPRSA (307 aa)) is condensation/cyclization. Residues 563 to 950 (RAAEAPDADA…GRVDQQVKVR (388 aa)) are adenylation. In terms of domain architecture, Carrier 2 spans 1350–1425 (EPLEAHEQAL…GLARHLQVQT (76 aa)). Serine 1385 carries the O-(pantetheine 4'-phosphoryl)serine modification.

Belongs to the NRP synthetase family. Pantetheine 4'-phosphate serves as cofactor.

The catalysed reaction is holo-[peptidyl-carrier protein] + L-cysteine + ATP = L-cysteinyl-[peptidyl-carrier protein] + AMP + diphosphate. It participates in siderophore biosynthesis. The protein operates within antifungal biosynthesis. Involved in the biosynthesis of the siderophore pyochelin. Accepts salicylate activated by PchD at the first peptidyl carrier domain (ArCP), and activates and fixes one molecule of cysteine at the second peptidyl carrier domain (PCP1) via a thioester linkage to the phosphopanthetheine moiety. Then catalyzes the condensation reaction between the salicylate bound to the first site and the cysteine bound to the second site, and the cyclization of the cysteine to form the salicyl-thiazolinyl-S-PCP1 intermediate at the second site. When this intermediate is released by the action of a thioesterase, it produces the antifungal antibiotic dihydroaeruginoic acid (Dha or hydroxyphenyl-thiazolinyl-carboxylate). This Pseudomonas aeruginosa (strain ATCC 15692 / DSM 22644 / CIP 104116 / JCM 14847 / LMG 12228 / 1C / PRS 101 / PAO1) protein is Pyochelin synthetase PchE.